Reading from the N-terminus, the 361-residue chain is 3-dehydroquinate synthase (361 aa).

Residues 71 to 76 (DGEQYK), 105 to 109 (GVIGD), 129 to 130 (TT), Lys-142, and Lys-151 contribute to the NAD(+) site. Residues Glu-184, His-247, and His-264 each coordinate Zn(2+).

This sequence belongs to the sugar phosphate cyclases superfamily. Dehydroquinate synthase family. Requires Co(2+) as cofactor. Zn(2+) is required as a cofactor. NAD(+) serves as cofactor.

It localises to the cytoplasm. It catalyses the reaction 7-phospho-2-dehydro-3-deoxy-D-arabino-heptonate = 3-dehydroquinate + phosphate. It participates in metabolic intermediate biosynthesis; chorismate biosynthesis; chorismate from D-erythrose 4-phosphate and phosphoenolpyruvate: step 2/7. Catalyzes the conversion of 3-deoxy-D-arabino-heptulosonate 7-phosphate (DAHP) to dehydroquinate (DHQ). In Pectobacterium atrosepticum (strain SCRI 1043 / ATCC BAA-672) (Erwinia carotovora subsp. atroseptica), this protein is 3-dehydroquinate synthase.